A 144-amino-acid chain; its full sequence is Large ribosomal subunit protein uL15 (144 aa).

The tract at residues 1-49 (MKLNTLSPAAGAKSAAKRVGRGIGSGLGKTAGRGHKGQKSRSGGGVRVG) is disordered. The segment covering 21 to 31 (RGIGSGLGKTA) has biased composition (gly residues).

This sequence belongs to the universal ribosomal protein uL15 family. As to quaternary structure, part of the 50S ribosomal subunit.

In terms of biological role, binds to the 23S rRNA. This is Large ribosomal subunit protein uL15 from Shewanella loihica (strain ATCC BAA-1088 / PV-4).